We begin with the raw amino-acid sequence, 100 residues long: Urease subunit gamma (100 aa).

Belongs to the urease gamma subunit family. Heterotrimer of UreA (gamma), UreB (beta) and UreC (alpha) subunits. Three heterotrimers associate to form the active enzyme.

The protein resides in the cytoplasm. The enzyme catalyses urea + 2 H2O + H(+) = hydrogencarbonate + 2 NH4(+). The protein operates within nitrogen metabolism; urea degradation; CO(2) and NH(3) from urea (urease route): step 1/1. The chain is Urease subunit gamma from Bacillus cereus (strain ATCC 10987 / NRS 248).